The primary structure comprises 262 residues: Cyclin-dependent kinase inhibitor 1 (262 aa).

A disordered region spans residues 140–212 (SDVAEAGSEH…SAQQATRPKI (73 aa)). Positions 160–169 (SGRDRERRET) are enriched in basic and acidic residues. Residues 198–208 (SAATASAQQAT) show a composition bias toward low complexity.

It belongs to the CDI family. ICK/KRP subfamily. In terms of tissue distribution, expressed in roots, stems, leaves and apex.

Its function is as follows. Regulates the production of endosperm cells, affecting seed filling and embryo development. Regulates endoreduplication of endosperm cells. May play a role in the exit from the mitotic cell cycle during rice grain formation. Inhibitis leaf elongation rates by decreasing cell number, that is partly compensated by increased cell size. May not affect growth rate or cell size of the primary root. The protein is Cyclin-dependent kinase inhibitor 1 (KRP1) of Oryza sativa subsp. japonica (Rice).